The following is a 379-amino-acid chain: L-lactate dehydrogenase (379 aa).

The FMN hydroxy acid dehydrogenase domain occupies 1 to 379 (MIISASTDYR…IGRDSLVSLP (379 aa)). Tyrosine 24 provides a ligand contact to substrate. The FMN site is built by serine 106 and glutamine 127. Residue tyrosine 129 coordinates substrate. Threonine 155 lines the FMN pocket. Arginine 164 provides a ligand contact to substrate. Position 251 (lysine 251) interacts with FMN. The active-site Proton acceptor is the histidine 275. Arginine 278 contributes to the substrate binding site. FMN is bound at residue 306 to 330 (DSGIRTGLDVVRMLALGADTVLLGR).

This sequence belongs to the FMN-dependent alpha-hydroxy acid dehydrogenase family. Requires FMN as cofactor.

The protein resides in the cell inner membrane. It carries out the reaction (S)-lactate + A = pyruvate + AH2. In terms of biological role, catalyzes the conversion of L-lactate to pyruvate. Is coupled to the respiratory chain. The protein is L-lactate dehydrogenase of Stenotrophomonas maltophilia (strain K279a).